Reading from the N-terminus, the 218-residue chain is Ornithine decarboxylase antizyme 2 (218 aa).

This sequence belongs to the ODC antizyme family. In terms of assembly, interacts with ODC1 and thereby sterically blocks ODC homodimerization. Expressed ubiquitously in 24 hours embryos, with highest levels in telencephalon, lens, retina, cerebellum and hindbrain primordia.

Ornithine decarboxylase (ODC) antizyme protein that negatively regulates ODC activity and intracellular polyamine biosynthesis and uptake in response to increased intracellular polyamine levels. Binds to ODC monomers, inhibiting the assembly of the functional ODC homodimers. Does not target the ODC monomers for degradation, which allows a protein synthesis-independent restoration of ODC activity. This is Ornithine decarboxylase antizyme 2 (oaz1b) from Danio rerio (Zebrafish).